The following is a 217-amino-acid chain: Adenylate kinase (217 aa).

10-15 is a binding site for ATP; it reads GAGKGT. Residues 30 to 59 are NMP; the sequence is STGDIFRKNISDKTPLGIEAKEYLDKGQLV. Residues Thr31, Arg36, 57–59, 85–88, and Gln92 each bind AMP; these read QLV and GFPR. The segment at 126 to 163 is LID; the sequence is GRRICPSCGASYHVKFNPPKLKDKCDICNNDIIQRKDD. Arg127 contributes to the ATP binding site. Residues Cys130 and Cys133 each contribute to the Zn(2+) site. 136–137 serves as a coordination point for ATP; the sequence is SY. Residues Cys150 and Cys153 each contribute to the Zn(2+) site. AMP is bound by residues Arg160 and Arg171. Gly199 contributes to the ATP binding site.

This sequence belongs to the adenylate kinase family. In terms of assembly, monomer.

The protein localises to the cytoplasm. It catalyses the reaction AMP + ATP = 2 ADP. It participates in purine metabolism; AMP biosynthesis via salvage pathway; AMP from ADP: step 1/1. In terms of biological role, catalyzes the reversible transfer of the terminal phosphate group between ATP and AMP. Plays an important role in cellular energy homeostasis and in adenine nucleotide metabolism. The polypeptide is Adenylate kinase (Clostridium kluyveri (strain NBRC 12016)).